The primary structure comprises 246 residues: Probable septum site-determining protein MinC (246 aa).

The disordered stretch occupies residues alanine 116 to glycine 140. The span at serine 119 to arginine 136 shows a compositional bias: pro residues.

This sequence belongs to the MinC family. Interacts with MinD and FtsZ.

Its function is as follows. Cell division inhibitor that blocks the formation of polar Z ring septums. Rapidly oscillates between the poles of the cell to destabilize FtsZ filaments that have formed before they mature into polar Z rings. Prevents FtsZ polymerization. This Xanthomonas oryzae pv. oryzae (strain MAFF 311018) protein is Probable septum site-determining protein MinC.